Here is a 97-residue protein sequence, read N- to C-terminus: Defensin alpha 4 (97 aa).

The first 19 residues, 1 to 19 (MRIIAILAAILLVALQVRA), serve as a signal peptide directing secretion. Positions 20 to 63 (GPLQARGDEAPGQEQRGPEDQDISISFAWDKSSALQVSGSTRGM) are excised as a propeptide. Cystine bridges form between C65–C93, C67–C82, and C72–C92. D97 is a propeptide.

The protein belongs to the alpha-defensin family. In terms of assembly, homodimer; homodimerization seems to be required for killing S.aureus, but not E.coli. Interacts with CD4. Interacts with Bacillus anthracis lef; homodimerization is required for the interaction. In terms of processing, the three-dimensional structure formed by the three intramolecular disulfide bridges is indispensable for effective bacterial killing.

The protein localises to the secreted. The protein resides in the cytoplasmic vesicle. Its subcellular location is the secretory vesicle. Host-defense peptide that has antimicrobial activity against Gram-negative bacteria, and to a lesser extent also against Gram-positive bacteria and fungi. Exhibits antimicrobial activity against Gram-negative E.coli and E.aerogenes and Gram-positive S.faecalis, S.aureus and B.cereus and the yeast C.albicans (in vitro). Inhibits corticotropin (ACTH)-stimulated corticosterone production (in vitro). Inhibits enzymatic activity of B.anthracis lef/anthrax lethal factor (in vitro). The polypeptide is Defensin alpha 4 (DEFA4) (Pan troglodytes (Chimpanzee)).